We begin with the raw amino-acid sequence, 515 residues long: MEAQTKVIIIDYGSQVTQLIARRVREAGVYSEIHPCIVTADQVRAMKPAAVILSGGPASVGEADAPTLEKGLLELGVPVLAICYGMQLLGHNLGGQLATSETREYGPADLTLLGDCPLWDGIDKSATTRVWMSHGDKVKTPPPGFAVVGRTATLDVAAMADDARRIYAVQFHPEVHHTEEGTRIINNFLFHVAKLKADWTMSSFVERAIKEMAETVGDRHVVCALSGGIDSTVVAVLLHKAIGKRLHCIFVDNGVLRLNEGQEVVDYLREHFDLNLKYVQAQRRFLDKLEGVEDPEQKRKIIGYTFIEVFDEEAKALGHVDFLAQGTLYPDVIESVSHKGPSAVIKSHHNVGGLPEKMNLKLIEPLRELFKDEVRKVAGELGLPDFIIWRHPFPGPGLAIRVIGEITEERLDILRKADKIVQAELMSSGWYRKVWQGFAVLLPLKTVGVMGDGRTYEHVIALRIVDSVDAMTADWARLPSELLERISSRIINEVKGVNRVVYDISSKPPSTIEWE.

The region spanning 6 to 198 (KVIIIDYGSQ…LFHVAKLKAD (193 aa)) is the Glutamine amidotransferase type-1 domain. Residue C83 is the Nucleophile of the active site. Catalysis depends on residues H172 and E174. The GMPS ATP-PPase domain maps to 199-390 (WTMSSFVERA…LGLPDFIIWR (192 aa)). 226–232 (SGGIDST) is a binding site for ATP.

Homodimer.

It carries out the reaction XMP + L-glutamine + ATP + H2O = GMP + L-glutamate + AMP + diphosphate + 2 H(+). It participates in purine metabolism; GMP biosynthesis; GMP from XMP (L-Gln route): step 1/1. Catalyzes the synthesis of GMP from XMP. The polypeptide is GMP synthase [glutamine-hydrolyzing] (Nitratidesulfovibrio vulgaris (strain DSM 19637 / Miyazaki F) (Desulfovibrio vulgaris)).